The primary structure comprises 254 residues: Pyridoxine 5'-phosphate synthase (254 aa).

N12 contributes to the 3-amino-2-oxopropyl phosphate binding site. 14–15 (DH) is a 1-deoxy-D-xylulose 5-phosphate binding site. Residue R23 participates in 3-amino-2-oxopropyl phosphate binding. H48 (proton acceptor) is an active-site residue. 1-deoxy-D-xylulose 5-phosphate-binding residues include R50 and H55. Catalysis depends on E75, which acts as the Proton acceptor. Position 105 (T105) interacts with 1-deoxy-D-xylulose 5-phosphate. Catalysis depends on H199, which acts as the Proton donor. 3-amino-2-oxopropyl phosphate-binding positions include G200 and 221–222 (GF).

It belongs to the PNP synthase family. As to quaternary structure, homooctamer; tetramer of dimers.

The protein resides in the cytoplasm. It catalyses the reaction 3-amino-2-oxopropyl phosphate + 1-deoxy-D-xylulose 5-phosphate = pyridoxine 5'-phosphate + phosphate + 2 H2O + H(+). It participates in cofactor biosynthesis; pyridoxine 5'-phosphate biosynthesis; pyridoxine 5'-phosphate from D-erythrose 4-phosphate: step 5/5. Functionally, catalyzes the complicated ring closure reaction between the two acyclic compounds 1-deoxy-D-xylulose-5-phosphate (DXP) and 3-amino-2-oxopropyl phosphate (1-amino-acetone-3-phosphate or AAP) to form pyridoxine 5'-phosphate (PNP) and inorganic phosphate. The sequence is that of Pyridoxine 5'-phosphate synthase from Rhodopseudomonas palustris (strain TIE-1).